A 210-amino-acid polypeptide reads, in one-letter code: Large ribosomal subunit protein uL3 (210 aa).

A disordered region spans residues 123 to 144; the sequence is KRHGQSRGPMAHGSRYHRRPGS.

The protein belongs to the universal ribosomal protein uL3 family. In terms of assembly, part of the 50S ribosomal subunit. Forms a cluster with proteins L14 and L19.

One of the primary rRNA binding proteins, it binds directly near the 3'-end of the 23S rRNA, where it nucleates assembly of the 50S subunit. This Alkaliphilus metalliredigens (strain QYMF) protein is Large ribosomal subunit protein uL3.